The primary structure comprises 142 residues: Nucleoside diphosphate kinase (142 aa).

Residues lysine 9, phenylalanine 57, arginine 85, threonine 91, arginine 102, and asparagine 112 each coordinate ATP. Histidine 115 serves as the catalytic Pros-phosphohistidine intermediate.

Belongs to the NDK family. Homotetramer. It depends on Mg(2+) as a cofactor.

The protein resides in the cytoplasm. The enzyme catalyses a 2'-deoxyribonucleoside 5'-diphosphate + ATP = a 2'-deoxyribonucleoside 5'-triphosphate + ADP. It carries out the reaction a ribonucleoside 5'-diphosphate + ATP = a ribonucleoside 5'-triphosphate + ADP. Major role in the synthesis of nucleoside triphosphates other than ATP. The ATP gamma phosphate is transferred to the NDP beta phosphate via a ping-pong mechanism, using a phosphorylated active-site intermediate. This is Nucleoside diphosphate kinase from Dehalococcoides mccartyi (strain ATCC BAA-2100 / JCM 16839 / KCTC 5957 / BAV1).